The chain runs to 178 residues: MGDKKSPVAVGMTVLPPNQENFVDAGSTTLMNKPGEPIFKLAINLTNKNHSHIAIEDRAHQSSRLQVQKVEFKCTEDRKPISVNLKLHNPTAVTVSYKVRCTSADIFRVQPPLGFVKPSETVSIVIWYQNQDKKDAISKNHYFAFYHTNSDGRTARELWANSKVEGVRRLPASFLSTK.

The region spanning 52–177 is the MSP domain; it reads HIAIEDRAHQ…RRLPASFLST (126 aa).

This is an uncharacterized protein from Caenorhabditis elegans.